We begin with the raw amino-acid sequence, 542 residues long: Putative selenium-binding protein (542 aa).

It belongs to the selenium-binding protein family.

The protein is Putative selenium-binding protein of Caenorhabditis elegans.